A 555-amino-acid polypeptide reads, in one-letter code: Cytochrome P450 78A11 (555 aa).

A helical transmembrane segment spans residues 12 to 32 (VDATWWAYALPALLGADTLCA). Cys-495 serves as a coordination point for heme.

This sequence belongs to the cytochrome P450 family. It depends on heme as a cofactor. Expressed in seedlings, shoot apices and young panicles, but not in mature leaves, calli and roots.

It localises to the membrane. Involved in the regular timing (plastochron) of lateral organs formation. May regulate the rate of leaf initiation and the duration of vegetative phase. Seems to be redundant to the function of PLASTOCHRON2, but to act in an independent pathway. This chain is Cytochrome P450 78A11 (CYP78A11), found in Oryza sativa subsp. japonica (Rice).